Here is a 298-residue protein sequence, read N- to C-terminus: Protein OS-9 homolog (298 aa).

The first 25 residues, 1–25 (MGLAGGARVVLFVVAAAAAAALTAA), serve as a signal peptide directing secretion. A glycan (N-linked (GlcNAc...) asparagine) is linked at N95. An MRH domain is found at 121 to 246 (DQCFYRHEGW…TVQSPMLCKN (126 aa)). A disulfide bridge links C123 with C136. A mannooligosaccharide derivative is bound by residues W130, W131, and Q143. N171 and N197 each carry an N-linked (GlcNAc...) asparagine glycan. Cystine bridges form between C201–C232 and C216–C244. A mannooligosaccharide derivative is bound by residues D202, R208, E228, and Y234.

It belongs to the OS-9 family. As to quaternary structure, interacts with HRD3.

It localises to the endoplasmic reticulum. Its function is as follows. Lectin which functions in endoplasmic reticulum (ER) quality control and ER-associated degradation (ERAD). May bind terminally misfolded non-glycosylated proteins as well as improperly folded glycoproteins, retain them in the ER, and possibly transfer them to the ubiquitination machinery and promote their degradation. This is Protein OS-9 homolog from Oryza sativa subsp. japonica (Rice).